The chain runs to 461 residues: Flavin-containing monooxygenase FMO GS-OX4 (461 aa).

17 to 22 (GAGAAG) is an FAD binding site. Residue 211–216 (GNFASG) coordinates NADP(+).

Belongs to the FMO family.

The enzyme catalyses a (Z)-omega-(methylsulfanyl)-N-sulfo-alkylhydroximate S-glucoside + NADPH + O2 + H(+) = a (Z)-omega-(methylsulfinyl)-alkyl-glucosinolate + NADP(+) + H2O. In terms of biological role, catalyzes the conversion of methylthioalkyl glucosinolates of any chain length into methylsulfinylalkyl glucosinolates. This is Flavin-containing monooxygenase FMO GS-OX4 (FMOGS-OX4) from Arabidopsis thaliana (Mouse-ear cress).